The chain runs to 391 residues: GTPase Obg (391 aa).

The region spanning M1 to L159 is the Obg domain. One can recognise an OBG-type G domain in the interval A160 to K333. GTP is bound by residues G166 to S173, F191 to V195, D213 to G216, N283 to D286, and S314 to I316. Mg(2+) contacts are provided by S173 and T193.

The protein belongs to the TRAFAC class OBG-HflX-like GTPase superfamily. OBG GTPase family. In terms of assembly, monomer. It depends on Mg(2+) as a cofactor.

The protein localises to the cytoplasm. Its function is as follows. An essential GTPase which binds GTP, GDP and possibly (p)ppGpp with moderate affinity, with high nucleotide exchange rates and a fairly low GTP hydrolysis rate. Plays a role in control of the cell cycle, stress response, ribosome biogenesis and in those bacteria that undergo differentiation, in morphogenesis control. In Photorhabdus laumondii subsp. laumondii (strain DSM 15139 / CIP 105565 / TT01) (Photorhabdus luminescens subsp. laumondii), this protein is GTPase Obg.